The following is a 419-amino-acid chain: Enolase (419 aa).

A (2R)-2-phosphoglycerate-binding site is contributed by glutamine 161. Glutamate 205 (proton donor) is an active-site residue. 3 residues coordinate Mg(2+): aspartate 240, glutamate 283, and aspartate 309. 4 residues coordinate (2R)-2-phosphoglycerate: lysine 334, arginine 363, serine 364, and lysine 385. The active-site Proton acceptor is the lysine 334.

Belongs to the enolase family. It depends on Mg(2+) as a cofactor.

Its subcellular location is the cytoplasm. The protein resides in the secreted. It localises to the cell surface. It carries out the reaction (2R)-2-phosphoglycerate = phosphoenolpyruvate + H2O. The protein operates within carbohydrate degradation; glycolysis; pyruvate from D-glyceraldehyde 3-phosphate: step 4/5. Catalyzes the reversible conversion of 2-phosphoglycerate (2-PG) into phosphoenolpyruvate (PEP). It is essential for the degradation of carbohydrates via glycolysis. This Saccharolobus islandicus (strain Y.G.57.14 / Yellowstone #1) (Sulfolobus islandicus) protein is Enolase.